A 506-amino-acid polypeptide reads, in one-letter code: ATP synthase subunit alpha (506 aa).

An ATP-binding site is contributed by 171 to 178; sequence GDRKTGKT.

The protein belongs to the ATPase alpha/beta chains family. In terms of assembly, F-type ATPases have 2 components, CF(1) - the catalytic core - and CF(0) - the membrane proton channel. CF(1) has five subunits: alpha(3), beta(3), gamma(1), delta(1), epsilon(1). CF(0) has three main subunits: a(1), b(2) and c(9-12). The alpha and beta chains form an alternating ring which encloses part of the gamma chain. CF(1) is attached to CF(0) by a central stalk formed by the gamma and epsilon chains, while a peripheral stalk is formed by the delta and b chains.

It is found in the cell inner membrane. The catalysed reaction is ATP + H2O + 4 H(+)(in) = ADP + phosphate + 5 H(+)(out). In terms of biological role, produces ATP from ADP in the presence of a proton gradient across the membrane. The alpha chain is a regulatory subunit. In Anaplasma phagocytophilum (strain HZ), this protein is ATP synthase subunit alpha.